We begin with the raw amino-acid sequence, 315 residues long: Methionyl-tRNA formyltransferase (315 aa).

(6S)-5,6,7,8-tetrahydrofolate is bound at residue 113–116 (SLLP).

This sequence belongs to the Fmt family.

The catalysed reaction is L-methionyl-tRNA(fMet) + (6R)-10-formyltetrahydrofolate = N-formyl-L-methionyl-tRNA(fMet) + (6S)-5,6,7,8-tetrahydrofolate + H(+). Its function is as follows. Attaches a formyl group to the free amino group of methionyl-tRNA(fMet). The formyl group appears to play a dual role in the initiator identity of N-formylmethionyl-tRNA by promoting its recognition by IF2 and preventing the misappropriation of this tRNA by the elongation apparatus. This Escherichia coli (strain SE11) protein is Methionyl-tRNA formyltransferase.